A 349-amino-acid polypeptide reads, in one-letter code: Flap endonuclease 1 (349 aa).

The interval 1 to 98 (MDLGEIVEDV…EEIERRKRAK (98 aa)) is N-domain. Residues D27, D80, E152, E154, D173, D175, and D236 each contribute to the Mg(2+) site. Residues 116-258 (EIRKYAQAAV…TALRIIKKYN (143 aa)) are I-domain. Residues 341–349 (KQTGLDQWF) are interaction with PCNA.

The protein belongs to the XPG/RAD2 endonuclease family. FEN1 subfamily. As to quaternary structure, interacts with PCNA. PCNA stimulates the nuclease activity without altering cleavage specificity. Mg(2+) serves as cofactor.

Functionally, structure-specific nuclease with 5'-flap endonuclease and 5'-3' exonuclease activities involved in DNA replication and repair. During DNA replication, cleaves the 5'-overhanging flap structure that is generated by displacement synthesis when DNA polymerase encounters the 5'-end of a downstream Okazaki fragment. Binds the unpaired 3'-DNA end and kinks the DNA to facilitate 5' cleavage specificity. Cleaves one nucleotide into the double-stranded DNA from the junction in flap DNA, leaving a nick for ligation. Also involved in the base excision repair (BER) pathway. Acts as a genome stabilization factor that prevents flaps from equilibrating into structures that lead to duplications and deletions. Also possesses 5'-3' exonuclease activity on nicked or gapped double-stranded DNA. This chain is Flap endonuclease 1, found in Sulfolobus acidocaldarius (strain ATCC 33909 / DSM 639 / JCM 8929 / NBRC 15157 / NCIMB 11770).